The following is a 298-amino-acid chain: Nitrogenase iron protein (298 aa).

13–20 (GKGGIGKS) is a binding site for ATP. A [4Fe-4S] cluster-binding site is contributed by cysteine 101. Arginine 104 carries the post-translational modification ADP-ribosylarginine; by dinitrogenase reductase ADP-ribosyltransferase. Residue cysteine 135 coordinates [4Fe-4S] cluster.

It belongs to the NifH/BchL/ChlL family. Homodimer. Requires [4Fe-4S] cluster as cofactor. The reversible ADP-ribosylation of Arg-104 inactivates the nitrogenase reductase and regulates nitrogenase activity.

The enzyme catalyses N2 + 8 reduced [2Fe-2S]-[ferredoxin] + 16 ATP + 16 H2O = H2 + 8 oxidized [2Fe-2S]-[ferredoxin] + 2 NH4(+) + 16 ADP + 16 phosphate + 6 H(+). In terms of biological role, the key enzymatic reactions in nitrogen fixation are catalyzed by the nitrogenase complex, which has 2 components: the iron protein and the molybdenum-iron protein. This is Nitrogenase iron protein from Cyanothece sp. (strain PCC 7425 / ATCC 29141).